Consider the following 212-residue polypeptide: ATP-dependent dethiobiotin synthetase BioD (212 aa).

13 to 18 contributes to the ATP binding site; the sequence is GIGKTV. Threonine 17 lines the Mg(2+) pocket. The active site involves lysine 33. Serine 37 provides a ligand contact to substrate. A Mg(2+)-binding site is contributed by glutamate 100. Residues 100–103 and 184–186 contribute to the ATP site; these read EGAG and PRL.

Belongs to the dethiobiotin synthetase family. As to quaternary structure, homodimer. Mg(2+) serves as cofactor.

The protein resides in the cytoplasm. It carries out the reaction (7R,8S)-7,8-diammoniononanoate + CO2 + ATP = (4R,5S)-dethiobiotin + ADP + phosphate + 3 H(+). The protein operates within cofactor biosynthesis; biotin biosynthesis; biotin from 7,8-diaminononanoate: step 1/2. In terms of biological role, catalyzes a mechanistically unusual reaction, the ATP-dependent insertion of CO2 between the N7 and N8 nitrogen atoms of 7,8-diaminopelargonic acid (DAPA, also called 7,8-diammoniononanoate) to form a ureido ring. This chain is ATP-dependent dethiobiotin synthetase BioD, found in Agrobacterium fabrum (strain C58 / ATCC 33970) (Agrobacterium tumefaciens (strain C58)).